The sequence spans 265 residues: Cytochrome c oxidase subunit 3 (265 aa).

Helical transmembrane passes span 16-36 (PWPI…VMYM), 41-61 (GGAT…FVWW), 81-101 (GPRY…FALF), 162-182 (AVYA…FQGM), 200-220 (FFLA…FSIV), and 245-265 (WHFV…WGGI).

It belongs to the cytochrome c oxidase subunit 3 family. Component of the cytochrome c oxidase (complex IV, CIV), a multisubunit enzyme composed of a catalytic core of 3 subunits and several supernumerary subunits. The complex exists as a monomer or a dimer and forms supercomplexes (SCs) in the inner mitochondrial membrane with ubiquinol-cytochrome c oxidoreductase (cytochrome b-c1 complex, complex III, CIII).

The protein localises to the mitochondrion inner membrane. The enzyme catalyses 4 Fe(II)-[cytochrome c] + O2 + 8 H(+)(in) = 4 Fe(III)-[cytochrome c] + 2 H2O + 4 H(+)(out). Functionally, component of the cytochrome c oxidase, the last enzyme in the mitochondrial electron transport chain which drives oxidative phosphorylation. The respiratory chain contains 3 multisubunit complexes succinate dehydrogenase (complex II, CII), ubiquinol-cytochrome c oxidoreductase (cytochrome b-c1 complex, complex III, CIII) and cytochrome c oxidase (complex IV, CIV), that cooperate to transfer electrons derived from NADH and succinate to molecular oxygen, creating an electrochemical gradient over the inner membrane that drives transmembrane transport and the ATP synthase. Cytochrome c oxidase is the component of the respiratory chain that catalyzes the reduction of oxygen to water. Electrons originating from reduced cytochrome c in the intermembrane space (IMS) are transferred via the dinuclear copper A center (CU(A)) of subunit 2 and heme A of subunit 1 to the active site in subunit 1, a binuclear center (BNC) formed by heme A3 and copper B (CU(B)). The BNC reduces molecular oxygen to 2 water molecules using 4 electrons from cytochrome c in the IMS and 4 protons from the mitochondrial matrix. The polypeptide is Cytochrome c oxidase subunit 3 (COX3) (Helianthus annuus (Common sunflower)).